Reading from the N-terminus, the 229-residue chain is 3-dehydroquinate dehydratase (229 aa).

3-dehydroquinate contacts are provided by residues 33–35 (EWR) and Arg-65. His-121 serves as the catalytic Proton donor/acceptor. Catalysis depends on Lys-146, which acts as the Schiff-base intermediate with substrate. 3-dehydroquinate is bound by residues Arg-188, Ser-207, and Gln-211.

This sequence belongs to the type-I 3-dehydroquinase family. In terms of assembly, homodimer.

It catalyses the reaction 3-dehydroquinate = 3-dehydroshikimate + H2O. Its pathway is metabolic intermediate biosynthesis; chorismate biosynthesis; chorismate from D-erythrose 4-phosphate and phosphoenolpyruvate: step 3/7. Involved in the third step of the chorismate pathway, which leads to the biosynthesis of aromatic amino acids. Catalyzes the cis-dehydration of 3-dehydroquinate (DHQ) and introduces the first double bond of the aromatic ring to yield 3-dehydroshikimate. This is 3-dehydroquinate dehydratase from Lactococcus lactis subsp. cremoris (strain SK11).